Consider the following 300-residue polypeptide: Haloalkane dehalogenase 1 (300 aa).

Residues 47 to 176 form the AB hydrolase-1 domain; that stretch reads PPIVLLHGEP…FARYSPVLPA (130 aa). Aspartate 123 functions as the Nucleophile in the catalytic mechanism. Aspartate 250 (proton donor) is an active-site residue. The active-site Proton acceptor is histidine 279.

The protein belongs to the haloalkane dehalogenase family. Type 1 subfamily. As to quaternary structure, monomer.

It carries out the reaction 1-haloalkane + H2O = a halide anion + a primary alcohol + H(+). Catalyzes hydrolytic cleavage of carbon-halogen bonds in halogenated aliphatic compounds, leading to the formation of the corresponding primary alcohols, halide ions and protons. This chain is Haloalkane dehalogenase 1 (dhmA1), found in Mycobacterium bovis (strain ATCC BAA-935 / AF2122/97).